A 228-amino-acid chain; its full sequence is L-ribulose-5-phosphate 4-epimerase UlaF (228 aa).

Residues 26–27 (GN), 43–44 (SG), and 72–73 (SS) each bind substrate. Aspartate 74, histidine 93, and histidine 95 together coordinate Zn(2+). The active-site Proton donor/acceptor is the aspartate 118. Position 167 (histidine 167) interacts with Zn(2+). Tyrosine 225 serves as the catalytic Proton donor/acceptor.

Belongs to the aldolase class II family. AraD/FucA subfamily. Requires Zn(2+) as cofactor.

It catalyses the reaction L-ribulose 5-phosphate = D-xylulose 5-phosphate. It functions in the pathway cofactor degradation; L-ascorbate degradation; D-xylulose 5-phosphate from L-ascorbate: step 4/4. Functionally, catalyzes the isomerization of L-ribulose 5-phosphate to D-xylulose 5-phosphate. Is involved in the anaerobic L-ascorbate utilization. This is L-ribulose-5-phosphate 4-epimerase UlaF from Escherichia coli (strain SMS-3-5 / SECEC).